Here is a 207-residue protein sequence, read N- to C-terminus: Uridine kinase (207 aa).

Glycine 13–threonine 20 contributes to the ATP binding site.

It belongs to the uridine kinase family.

It is found in the cytoplasm. The enzyme catalyses uridine + ATP = UMP + ADP + H(+). The catalysed reaction is cytidine + ATP = CMP + ADP + H(+). It participates in pyrimidine metabolism; CTP biosynthesis via salvage pathway; CTP from cytidine: step 1/3. It functions in the pathway pyrimidine metabolism; UMP biosynthesis via salvage pathway; UMP from uridine: step 1/1. This is Uridine kinase from Ureaplasma urealyticum serovar 10 (strain ATCC 33699 / Western).